The chain runs to 547 residues: Probable aquaporin-5 (547 aa).

Positions 1–13 (MSSSILNNRSARS) are enriched in polar residues. Residues 1–208 (MSSSILNNRS…DPRIPPNDRR (208 aa)) are disordered. Residues 1–269 (MSSSILNNRS…QWMNSNFKNH (269 aa)) are Cytoplasmic-facing. Over residues 15–32 (PAGANPAFNPPAEASSSS) the composition is skewed to low complexity. 2 stretches are compositionally biased toward basic and acidic residues: residues 152–169 (EYERYYRNEGRNDRDRYT) and 198–208 (DDPRIPPNDRR). A helical membrane pass occupies residues 270–290 (FVAGVGEFIGTTMFLFFAFAG). The Extracellular segment spans residues 291–316 (TEVANIQADTTNRTTTGESTGSLNVS). Asn-302 and Asn-314 each carry an N-linked (GlcNAc...) asparagine glycan. Residues 317–337 (KLLYISIIFGFSLMVNVWVFF) form a helical membrane-spanning segment. Residues 338 to 363 (RISGGLFNPAVTMAMLMVKAISVTRA) are Cytoplasmic-facing. Positions 345-347 (NPA) match the NPA 1 motif. Residues 364–384 (IVLFLAQILGSMLASVVVRYL) traverse the membrane as a helical segment. Residues 385-400 (FPETFNVRTTLGGGAS) are Extracellular-facing. A helical transmembrane segment spans residues 401 to 421 (LVQGVFIEALLTAELVFTIFM). The Cytoplasmic portion of the chain corresponds to 422–428 (LAKEKHR). Residues 429 to 449 (ATFIAPVGIGLALFIAEMVGV) traverse the membrane as a helical segment. Over 450–475 (QFTGGSLNPARSFGPCVITGSFDTEH) the chain is Extracellular. Positions 457-459 (NPA) match the NPA 2 motif. The chain crosses the membrane as a helical span at residues 476–496 (WIYWVGPAIGSLIAVCFYWFI). Over 497–547 (KTLEYEMANPGADGDDLNDPTKNPEKRAEIQASKPVPTAAFGSGKTASILS) the chain is Cytoplasmic. Positions 510-547 (GDDLNDPTKNPEKRAEIQASKPVPTAAFGSGKTASILS) are disordered.

This sequence belongs to the MIP/aquaporin (TC 1.A.8) family.

The protein localises to the membrane. The enzyme catalyses H2O(in) = H2O(out). In terms of biological role, probable water channel that may have redundant functions with FgAQP3. The polypeptide is Probable aquaporin-5 (Gibberella zeae (strain ATCC MYA-4620 / CBS 123657 / FGSC 9075 / NRRL 31084 / PH-1) (Wheat head blight fungus)).